Reading from the N-terminus, the 313-residue chain is Porphobilinogen deaminase (313 aa).

C242 bears the S-(dipyrrolylmethanemethyl)cysteine mark.

This sequence belongs to the HMBS family. As to quaternary structure, monomer. Dipyrromethane is required as a cofactor.

The enzyme catalyses 4 porphobilinogen + H2O = hydroxymethylbilane + 4 NH4(+). It participates in porphyrin-containing compound metabolism; protoporphyrin-IX biosynthesis; coproporphyrinogen-III from 5-aminolevulinate: step 2/4. In terms of biological role, tetrapolymerization of the monopyrrole PBG into the hydroxymethylbilane pre-uroporphyrinogen in several discrete steps. This Enterobacter sp. (strain 638) protein is Porphobilinogen deaminase.